Consider the following 177-residue polypeptide: Adenine phosphoribosyltransferase (177 aa).

It belongs to the purine/pyrimidine phosphoribosyltransferase family. Homodimer.

It localises to the cytoplasm. The catalysed reaction is AMP + diphosphate = 5-phospho-alpha-D-ribose 1-diphosphate + adenine. It functions in the pathway purine metabolism; AMP biosynthesis via salvage pathway; AMP from adenine: step 1/1. Its function is as follows. Catalyzes a salvage reaction resulting in the formation of AMP, that is energically less costly than de novo synthesis. The protein is Adenine phosphoribosyltransferase of Chlorobium luteolum (strain DSM 273 / BCRC 81028 / 2530) (Pelodictyon luteolum).